Reading from the N-terminus, the 218-residue chain is Thiopurine S-methyltransferase (218 aa).

Residues W10, L45, E66, and R123 each contribute to the S-adenosyl-L-methionine site.

It belongs to the class I-like SAM-binding methyltransferase superfamily. TPMT family.

Its subcellular location is the cytoplasm. The catalysed reaction is S-adenosyl-L-methionine + a thiopurine = S-adenosyl-L-homocysteine + a thiopurine S-methylether.. The polypeptide is Thiopurine S-methyltransferase (Shewanella loihica (strain ATCC BAA-1088 / PV-4)).